The sequence spans 1754 residues: Probable outer membrane protein PmpB (1754 aa).

Residues 1–14 form the signal peptide; sequence MSSMKWLSATAVFA. Low complexity-rich tracts occupy residues 68-105 and 212-232; these read NIPT…TPDP and SETS…PSSS. 6 disordered regions span residues 68 to 109, 190 to 235, 252 to 271, 397 to 438, 621 to 668, and 1299 to 1332; these read NIPT…KGGG, SSNS…SRAE, PAAQ…GSGG, NADA…ATAK, AAEN…STPS, and TSSA…ATTP. 2 stretches are compositionally biased toward polar residues: residues 252-264 and 402-412; these read PAAQ…STPS and ASSSPQSGSGA. Composition is skewed to low complexity over residues 413 to 427, 636 to 668, 1299 to 1311, and 1320 to 1332; these read TTVS…GSDS, PTAD…STPS, TSSA…VSSS, and SAAA…ATTP. In terms of domain architecture, Autotransporter spans 1461-1754; that stretch reads DDIAYNNFWV…MTSCGARMIF (294 aa).

Belongs to the PMP outer membrane protein family.

It is found in the secreted. Its subcellular location is the cell wall. The protein localises to the cell outer membrane. This is Probable outer membrane protein PmpB (pmpB) from Chlamydia trachomatis serovar D (strain ATCC VR-885 / DSM 19411 / UW-3/Cx).